The following is a 475-amino-acid chain: U3 small nucleolar RNA-interacting protein 2 (475 aa).

Residues 1–75 form a disordered region; that stretch reads MSTAVATRKR…EEEEELEETA (75 aa). The Nuclear localization signal motif lies at 8–40; that stretch reads RKRAKPAPGPGAAPVAGKRRRKVDSAADRGKSK. Position 10 is an omega-N-methylarginine (Arg10). An N6-acetyllysine mark is found at Lys12 and Lys25. Residues Ser50, Ser51, Ser53, and Ser57 each carry the phosphoserine modification. Acidic residues predominate over residues 65-74; sequence EEEEEELEET. Lys113 participates in a covalent cross-link: Glycyl lysine isopeptide (Lys-Gly) (interchain with G-Cter in SUMO2). WD repeat units lie at residues 144 to 183, 197 to 236, 239 to 278, 281 to 320, 322 to 360, 374 to 413, and 419 to 460; these read GHQL…KLHV, GHSS…HLYT, GHRD…YVET, GHQD…QLVF, GHQG…PLAL, EQPF…RQLD, and PLVG…NSVC. Ser470 bears the Phosphoserine mark.

This sequence belongs to the WD repeat RRP9 family. As to quaternary structure, interacts specifically with the U3 small nucleolar RNA (U3 snoRNA). Binds a sub-fragment of the U3 snoRNA surrounding the B/C motif (3UBC). This association with the U3BC RNA is dependent on the binding of a protein called 15.5K to the box B/C motif. The association of the protein with the U3BC RNA was found to be also dependent on a conserved RNA structure that flanks the box B/C motif. Part of the small subunit (SSU) processome, composed of more than 70 proteins and the RNA chaperone small nucleolar RNA (snoRNA) U3. In terms of processing, acetylation at Lys-12 and Lys-25 by KAT2B/PCAF under stress impairs pre-rRNA processing. Deacetylation by SIRT7 enhances RRP9-binding to U3 snoRNA, which is a prerequisite for pre-rRNA processing.

It is found in the nucleus. It localises to the nucleolus. In terms of biological role, component of a nucleolar small nuclear ribonucleoprotein particle (snoRNP) thought to participate in the processing and modification of pre-ribosomal RNA (pre-rRNA). Part of the small subunit (SSU) processome, first precursor of the small eukaryotic ribosomal subunit. During the assembly of the SSU processome in the nucleolus, many ribosome biogenesis factors, an RNA chaperone and ribosomal proteins associate with the nascent pre-rRNA and work in concert to generate RNA folding, modifications, rearrangements and cleavage as well as targeted degradation of pre-ribosomal RNA by the RNA exosome. This Mus musculus (Mouse) protein is U3 small nucleolar RNA-interacting protein 2 (Rrp9).